The chain runs to 215 residues: Peroxiredoxin-5, mitochondrial (215 aa).

The N-terminal 53 residues, 1–53, are a transit peptide targeting the mitochondrion; that stretch reads MGLAGVCVLRRSAGYILGGAAGQSVAATAAARRRSEGGWASGGVRSFSRAAAA. A Thioredoxin domain is found at 57–215; the sequence is IKVGDAIPAV…SLAPSIISQL (159 aa). An N6-acetyllysine modification is found at Lys-76. Lys-84 carries the N6-acetyllysine; alternate modification. The residue at position 84 (Lys-84) is an N6-succinyllysine; alternate. Cys-101 functions as the Cysteine sulfenic acid (-SOH) intermediate in the catalytic mechanism. A lipid anchor (S-palmitoyl cysteine) is attached at Cys-101. Cys-101 and Cys-205 form a disulfide bridge. Lys-117 is modified (N6-succinyllysine). Phosphoserine is present on residues Ser-172 and Ser-183. The Microbody targeting signal motif lies at 213–215; that stretch reads SQL.

The protein belongs to the peroxiredoxin family. Prx5 subfamily. Monomer. S-palmitoylated. Palmitoylation occurs on the active site, inhibiting its reactivity; therefore PRDX5 palmitoylation status determines its antioxidant capacity. Post-translationally, S-palmitoylated. Depalmitoylated by ABHD10.

It is found in the mitochondrion. The protein resides in the cytoplasm. It localises to the peroxisome matrix. It catalyses the reaction a hydroperoxide + [thioredoxin]-dithiol = an alcohol + [thioredoxin]-disulfide + H2O. In terms of biological role, thiol-specific peroxidase that catalyzes the reduction of hydrogen peroxide and organic hydroperoxides to water and alcohols, respectively. Plays a role in cell protection against oxidative stress by detoxifying peroxides and as sensor of hydrogen peroxide-mediated signaling events. The sequence is that of Peroxiredoxin-5, mitochondrial (PRDX5) from Papio hamadryas (Hamadryas baboon).